A 599-amino-acid chain; its full sequence is Elongation factor 4 (599 aa).

A tr-type G domain is found at 2–184 (KHIRNFSIIA…RLVRDIPPPE (183 aa)). Residues 14–19 (DHGKST) and 131–134 (NKID) contribute to the GTP site.

This sequence belongs to the TRAFAC class translation factor GTPase superfamily. Classic translation factor GTPase family. LepA subfamily.

Its subcellular location is the cell inner membrane. It carries out the reaction GTP + H2O = GDP + phosphate + H(+). Its function is as follows. Required for accurate and efficient protein synthesis under certain stress conditions. May act as a fidelity factor of the translation reaction, by catalyzing a one-codon backward translocation of tRNAs on improperly translocated ribosomes. Back-translocation proceeds from a post-translocation (POST) complex to a pre-translocation (PRE) complex, thus giving elongation factor G a second chance to translocate the tRNAs correctly. Binds to ribosomes in a GTP-dependent manner. The chain is Elongation factor 4 from Erwinia tasmaniensis (strain DSM 17950 / CFBP 7177 / CIP 109463 / NCPPB 4357 / Et1/99).